We begin with the raw amino-acid sequence, 205 residues long: Protein Nef (205 aa).

A lipid anchor (N-myristoyl glycine; by host) is attached at G2. The residue at position 6 (S6) is a Phosphoserine; by host. An acidic; interacts with host PACS1 and PACS2; stabilizes the interaction of NEF/MHC-I with host AP1M1; necessary for MHC-I internalization region spans residues 62 to 65 (DNEE). An SH3-binding; interaction with Src family tyrosine kinases region spans residues 69–78 (PVRPQVPTRP). Positions 72–75 (PQVP) match the PxxP; stabilizes the interaction of NEF/MHC-I with host AP1M1; necessary for MHC-I internalization motif. Residues 108–124 (EILDLWVYHTQGFFPDW) form a mediates dimerization, Nef-PTE1 interaction region. Residues 148-180 (LTEEQVEQANEGDNNCLLHPICQHGMEDEDKEV) are binding to ATP6V1H. The Dileucine internalization motif; necessary for CD4 internalization signature appears at 164 to 165 (LL). A Diacidic; necessary for CD4 internalization motif is present at residues 174–175 (ED).

Belongs to the lentivirus primate group Nef protein family. Monomer; cytosolic form. Homodimer; membrane bound form. Interacts with Nef associated p21-activated kinase (PAK2); this interaction activates PAK2. Associates with the Nef-MHC-I-AP1 complex; this complex is required for MHC-I internalization. Interacts (via C-terminus) with host PI3-kinase. Interacts with host PACS1; this interaction seems to be weak. Interacts with host PACS2. Interacts with host LCK and MAPK3; these interactions inhibit the kinase activity of the latter. Interacts with host ATP6V1H; this interaction may play a role in CD4 endocytosis. Associates with the CD4-Nef-AP2 complex; this complex is required for CD4 internalization. Interacts with host AP2 subunit alpha and AP2 subunit sigma2. Interacts with TCR-zeta chain; this interaction up-regulates the Fas ligand (FasL) surface expression. Interacts with host HCK, LYN, and SRC; these interactions activate the Src family kinases. Interacts with MAP3K5; this interaction inhibits the Fas and TNFR-mediated death signals. Interacts with beta-COP and PTE1. Interacts with human RACK1; this increases Nef phosphorylation by PKC. Interacts with TP53; this interaction decreases the half-life of TP53, protecting the infected cell against p53-mediated apoptosis. In terms of processing, the virion-associated Nef proteins are cleaved by the viral protease to release the soluble C-terminal core protein. Nef is probably cleaved concomitantly with viral structural proteins on maturation of virus particles. Myristoylated. Post-translationally, phosphorylated on serine residues, probably by host PKCdelta and theta.

The protein resides in the host cell membrane. Its subcellular location is the virion. It localises to the secreted. It is found in the host Golgi apparatus membrane. Functionally, factor of infectivity and pathogenicity, required for optimal virus replication. Alters numerous pathways of T-lymphocyte function and down-regulates immunity surface molecules in order to evade host defense and increase viral infectivity. Alters the functionality of other immunity cells, like dendritic cells, monocytes/macrophages and NK cells. Its function is as follows. In infected CD4(+) T-lymphocytes, down-regulates the surface MHC-I, mature MHC-II, CD4, CD28, CCR5 and CXCR4 molecules. Mediates internalization and degradation of host CD4 through the interaction of with the cytoplasmic tail of CD4, the recruitment of AP-2 (clathrin adapter protein complex 2), internalization through clathrin coated pits, and subsequent transport to endosomes and lysosomes for degradation. Diverts host MHC-I molecules to the trans-Golgi network-associated endosomal compartments by an endocytic pathway to finally target them for degradation. MHC-I down-regulation may involve AP-1 (clathrin adapter protein complex 1) or possibly Src family kinase-ZAP70/Syk-PI3K cascade recruited by PACS2. In consequence infected cells are masked for immune recognition by cytotoxic T-lymphocytes. Decreasing the number of immune receptors also prevents reinfection by more HIV particles (superinfection). Down-regulates host SERINC3 and SERINC5 thereby excluding these proteins from the viral particles. Virion infectivity is drastically higher when SERINC3 or SERINC5 are excluded from the viral envelope, because these host antiviral proteins impair the membrane fusion event necessary for subsequent virion penetration. In terms of biological role, bypasses host T-cell signaling by inducing a transcriptional program nearly identical to that of anti-CD3 cell activation. Interaction with TCR-zeta chain up-regulates the Fas ligand (FasL). Increasing surface FasL molecules and decreasing surface MHC-I molecules on infected CD4(+) cells send attacking cytotoxic CD8+ T-lymphocytes into apoptosis. Plays a role in optimizing the host cell environment for viral replication without causing cell death by apoptosis. Protects the infected cells from apoptosis in order to keep them alive until the next virus generation is ready to strike. Inhibits the Fas and TNFR-mediated death signals by blocking MAP3K5/ASK1. Decreases the half-life of TP53, protecting the infected cell against p53-mediated apoptosis. Inhibits the apoptotic signals regulated by the Bcl-2 family proteins through the formation of a Nef/PI3-kinase/PAK2 complex that leads to activation of PAK2 and induces phosphorylation of host BAD. Functionally, extracellular Nef protein targets CD4(+) T-lymphocytes for apoptosis by interacting with CXCR4 surface receptors. This chain is Protein Nef, found in Simian immunodeficiency virus (isolate CPZ GAB1) (SIV-cpz).